A 176-amino-acid polypeptide reads, in one-letter code: Large ribosomal subunit protein uL10 (176 aa).

It belongs to the universal ribosomal protein uL10 family. Part of the ribosomal stalk of the 50S ribosomal subunit. The N-terminus interacts with L11 and the large rRNA to form the base of the stalk. The C-terminus forms an elongated spine to which L12 dimers bind in a sequential fashion forming a multimeric L10(L12)X complex.

Functionally, forms part of the ribosomal stalk, playing a central role in the interaction of the ribosome with GTP-bound translation factors. This is Large ribosomal subunit protein uL10 from Teredinibacter turnerae (strain ATCC 39867 / T7901).